Consider the following 108-residue polypeptide: uncharacterized protein (108 aa).

A lipid anchor (N-myristoyl glycine; by host) is attached at G2.

This is an uncharacterized protein from Acanthamoeba polyphaga (Amoeba).